The sequence spans 65 residues: Defensin Cg-Defm (65 aa).

Positions 1-22 are cleaved as a signal peptide; sequence MKVFVLLTLAVLLMVSADMAFA. Residues Phe-24, Gly-25, and Cys-26 each contribute to the beta-D-GlcNAc-(1-&gt;4)-Mur2Ac(oyl-L-Ala-gamma-D-Glu-L-Lys-D-Ala-D-Ala)-di-trans,octa-cis-undecaprenyl diphosphate site. Cystine bridges form between Cys-26–Cys-47, Cys-33–Cys-56, Cys-37–Cys-58, and Cys-42–Cys-61. The tract at residues 27–30 is binds to membrane interface; the sequence is PGNQ. His-36 is a beta-D-GlcNAc-(1-&gt;4)-Mur2Ac(oyl-L-Ala-gamma-D-Glu-L-Lys-D-Ala-D-Ala)-di-trans,octa-cis-undecaprenyl diphosphate binding site. Positions 48–54 are binds to membrane interface; that stretch reads DAATLWL. Cys-56 contributes to the beta-D-GlcNAc-(1-&gt;4)-Mur2Ac(oyl-L-Ala-gamma-D-Glu-L-Lys-D-Ala-D-Ala)-di-trans,octa-cis-undecaprenyl diphosphate binding site.

Belongs to the invertebrate defensin family. As to expression, expressed in the mantle. Low or no expression in most of the organs analyzed, including hemocytes, heart, digestive gland, and gills.

The protein localises to the secreted. It is found in the target cell membrane. Functionally, antibacterial peptide mostly active against Gram-positive bacteria (M.lysodeikticus, S.aureus, and the marine bacteria, B.stationis, and M.maritypicum). It acts by selectively inhibiting peptidoglycan biosynthesis through complex formation with the cell wall precursor lipid II (1:1 molar ratio) thus inhibiting cell wall synthesis. It does not disrupt cell membranes. Is noticeably more potent than Cg-Defh1. It shows no or limited activities against Gram-negative bacteria and filamentous fungi. The chain is Defensin Cg-Defm from Magallana gigas (Pacific oyster).